The following is a 368-amino-acid chain: Endophilin-A2 (368 aa).

Residues 1-21 (MSVAGLKKQFYKASQLVSEKV) form a membrane-binding amphipathic helix region. The region spanning 18-249 (SEKVGGAEGT…LKRRMREASS (232 aa)) is the BAR domain. Residues 60–87 (PNPASRAKLTMLNTVSKIRGQVKNPGYP) form a required for dimerization upon membrane association region. The stretch at 181–250 (EELRQAMEKF…KRRMREASSR (70 aa)) forms a coiled coil. The tract at residues 218 to 254 (LVDAQLDYHRQAVQILDELADKLKRRMREASSRPKRE) is interaction with ARC. The tract at residues 243-308 (RMREASSRPK…PSRSMPPLDQ (66 aa)) is disordered. A compositionally biased stretch (basic and acidic residues) spans 245-263 (REASSRPKREYKPKPRELL). Phosphoserine is present on residues Ser288 and Ser292. Thr298 carries the post-translational modification Phosphothreonine. In terms of domain architecture, SH3 spans 306–365 (LDQPSCKALYDFEPENDGELGFHEGDIITLTNQIDENWYEGMLDGQSGFFPLSYVEVLVP). Tyr315 is subject to Phosphotyrosine.

It belongs to the endophilin family. Interacts with ARC, SYNJ1 and DNM1. Interacts with PDCD6IP. Interacts with BIN2.

The protein localises to the cytoplasm. The protein resides in the early endosome membrane. Its subcellular location is the cell projection. It localises to the podosome. Implicated in endocytosis. May recruit other proteins to membranes with high curvature. This is Endophilin-A2 from Bos taurus (Bovine).